Consider the following 366-residue polypeptide: MSLYRKRLKIIKGEGIYVWDDQGRRYVDLIAGIGVAILGHNHPEWVEGIREQLNKLVIAGPMFNHEEKEEMLEELSKFVNFEYLYMGNSGTEAVEAALKFARLYTGRKEIIAMVNAFHGRTMGALSATWKPKYKKDFEPLVPGFKHIPFNDVEAAKEAISKETAAVIVEPIQGESGVIPAKKEFMKALRDLTEDVGALLIVDEVQTGLRTGKFLAVEHYKIEPDIVTMGKGIGNGIPVGLTLTNFDVERGKHGSTFGGNPLACKAVAITLRILRKERLIEKAKNKFIQIDADEVVTTRGKGLMIGIVFKTTIGKYVEELQNRGYLVHTAGQRVMRLLPPLIISKETMQDVKLAIEGVINDLRGGEN.

Pyridoxal 5'-phosphate is bound by residues 90-91 (GT) and Phe117. Arg120 lines the substrate pocket. 202 to 205 (DEVQ) provides a ligand contact to pyridoxal 5'-phosphate. Lys230 carries the N6-(pyridoxal phosphate)lysine modification. Ser254 is a binding site for substrate. Pyridoxal 5'-phosphate is bound at residue Thr255.

This sequence belongs to the class-III pyridoxal-phosphate-dependent aminotransferase family. LysJ subfamily. Homodimer. Pyridoxal 5'-phosphate serves as cofactor.

Its subcellular location is the cytoplasm. The catalysed reaction is [amino-group carrier protein]-C-terminal-gamma-(L-lysyl)-L-glutamate + 2-oxoglutarate = [amino-group carrier protein]-C-terminal-N-(1-carboxy-5-oxopentan-1-yl)-L-glutamine + L-glutamate. It catalyses the reaction [amino-group carrier protein]-C-terminal-gamma-(L-ornithyl)-L-glutamate + 2-oxoglutarate = [amino-group carrier protein]-C-terminal-gamma-(L-glutamyl-5-semialdehyde)-L-glutamate + L-glutamate. The protein operates within amino-acid biosynthesis; L-lysine biosynthesis via AAA pathway; L-lysine from L-alpha-aminoadipate (Thermus route): step 4/5. Its pathway is amino-acid biosynthesis; L-arginine biosynthesis. Functionally, involved in both the arginine and lysine biosynthetic pathways. This Pyrococcus horikoshii (strain ATCC 700860 / DSM 12428 / JCM 9974 / NBRC 100139 / OT-3) protein is Putative [LysW]-aminoadipate semialdehyde/glutamate semialdehyde transaminase.